A 169-amino-acid polypeptide reads, in one-letter code: Major pepsin inhibitor 3 (169 aa).

The first 20 residues, 1-20, serve as a signal peptide directing secretion; the sequence is MHVWLILSLASLWTSSIAYS. Position 21 is a pyrrolidone carboxylic acid (Gln21). 3 disulfides stabilise this stretch: Cys33–Cys79, Cys68–Cys86, and Cys99–Cys166. A disordered region spans residues 135 to 169; that stretch reads EEQQENQPPSSGMPHGAVPAGGLSPPPPPSFCTVQ. Over residues 158–169 the composition is skewed to pro residues; the sequence is SPPPPPSFCTVQ.

It belongs to the protease inhibitor I33 family. As to expression, body wall.

Its subcellular location is the secreted. In terms of biological role, this is an inhibitor of the aspartic protease pepsin. The protein is Major pepsin inhibitor 3 of Ascaris suum (Pig roundworm).